Consider the following 393-residue polypeptide: MTDNFFHGARVKENTDLQTAINDVDSTVIGLVAVADDADATTFPLDTPVLITRVISVLGKAGKTGSLYKSLKAISDQVSTRVIVVRVAAAGTEDGAKTQSQLIIGGSQADGSYTGMFALLTAEQKVGYRPRILGVPMYDTQEVTAQLRVIAKQLRAFSYSYCDGCETIAEAKTYREQFAEREGMLIWPNFIAYNSVSGENEEFPAVAYALGLRAKIDNEQGWHKSLSNVAVSNVLGITKDVFWALQAEDSDANELNANEVTTLIKRDGFRFWGNRTTDKDEYIFEVYTRTAQILADTIAEAQFTTVDSPLTPANVKDVVSGINAKLQGLVTAGRLIGAACWFDIVDNPKTSIPQGKAVVRYNYSPVPPLEDLTMIQTFTDQYYEAAFASLGGA.

Belongs to the myoviridae tail sheath protein family.

Its subcellular location is the virion. In terms of biological role, forms the virus contractile tail sheath. The sequence is that of Major tail sheath protein from Serratia phage KSP20 (Serratia marcescens bacteriophage KSP20).